Reading from the N-terminus, the 583-residue chain is 2-succinyl-5-enolpyruvyl-6-hydroxy-3-cyclohexene-1-carboxylate synthase (583 aa).

This sequence belongs to the TPP enzyme family. MenD subfamily. As to quaternary structure, homodimer. It depends on Mg(2+) as a cofactor. Mn(2+) serves as cofactor. Thiamine diphosphate is required as a cofactor.

The enzyme catalyses isochorismate + 2-oxoglutarate + H(+) = 5-enolpyruvoyl-6-hydroxy-2-succinyl-cyclohex-3-ene-1-carboxylate + CO2. It functions in the pathway quinol/quinone metabolism; 1,4-dihydroxy-2-naphthoate biosynthesis; 1,4-dihydroxy-2-naphthoate from chorismate: step 2/7. It participates in quinol/quinone metabolism; menaquinone biosynthesis. Its function is as follows. Catalyzes the thiamine diphosphate-dependent decarboxylation of 2-oxoglutarate and the subsequent addition of the resulting succinic semialdehyde-thiamine pyrophosphate anion to isochorismate to yield 2-succinyl-5-enolpyruvyl-6-hydroxy-3-cyclohexene-1-carboxylate (SEPHCHC). In Chlorobium chlorochromatii (strain CaD3), this protein is 2-succinyl-5-enolpyruvyl-6-hydroxy-3-cyclohexene-1-carboxylate synthase.